The chain runs to 130 residues: ATP synthase epsilon chain (130 aa).

Belongs to the ATPase epsilon chain family. In terms of assembly, F-type ATPases have 2 components, CF(1) - the catalytic core - and CF(0) - the membrane proton channel. CF(1) has five subunits: alpha(3), beta(3), gamma(1), delta(1), epsilon(1). CF(0) has three main subunits: a, b and c.

The protein resides in the cell membrane. Its function is as follows. Produces ATP from ADP in the presence of a proton gradient across the membrane. The chain is ATP synthase epsilon chain from Nocardia farcinica (strain IFM 10152).